The chain runs to 159 residues: Dihydrofolate reductase (159 aa).

Residues 1–158 (MISLIAALAV…HSYCFEILER (158 aa)) form the DHFR domain. Residue Ile-5 coordinates substrate. Residues Ala-7 and 13–19 (VIGMENA) each bind NADP(+). Asp-27 contacts substrate. Position 45-46 (45-46 (HT)) interacts with NADP(+). Substrate is bound by residues Arg-52 and Arg-57. NADP(+)-binding positions include 63 to 64 (SS), Lys-76, and 95 to 102 (GGGRVYEQ). Thr-113 contacts substrate.

It belongs to the dihydrofolate reductase family.

The enzyme catalyses (6S)-5,6,7,8-tetrahydrofolate + NADP(+) = 7,8-dihydrofolate + NADPH + H(+). It functions in the pathway cofactor biosynthesis; tetrahydrofolate biosynthesis; 5,6,7,8-tetrahydrofolate from 7,8-dihydrofolate: step 1/1. Its function is as follows. Key enzyme in folate metabolism. Catalyzes an essential reaction for de novo glycine and purine synthesis, and for DNA precursor synthesis. In Escherichia coli O6:H1 (strain CFT073 / ATCC 700928 / UPEC), this protein is Dihydrofolate reductase (folA).